The chain runs to 255 residues: Triosephosphate isomerase (255 aa).

9–11 (NWK) serves as a coordination point for substrate. The active-site Electrophile is the His-95. The Proton acceptor role is filled by Glu-167. Substrate is bound by residues Gly-173, Ser-212, and 233-234 (GG).

The protein belongs to the triosephosphate isomerase family. As to quaternary structure, homodimer.

The protein localises to the cytoplasm. The catalysed reaction is D-glyceraldehyde 3-phosphate = dihydroxyacetone phosphate. The protein operates within carbohydrate biosynthesis; gluconeogenesis. Its pathway is carbohydrate degradation; glycolysis; D-glyceraldehyde 3-phosphate from glycerone phosphate: step 1/1. In terms of biological role, involved in the gluconeogenesis. Catalyzes stereospecifically the conversion of dihydroxyacetone phosphate (DHAP) to D-glyceraldehyde-3-phosphate (G3P). The sequence is that of Triosephosphate isomerase from Escherichia fergusonii (strain ATCC 35469 / DSM 13698 / CCUG 18766 / IAM 14443 / JCM 21226 / LMG 7866 / NBRC 102419 / NCTC 12128 / CDC 0568-73).